Reading from the N-terminus, the 235-residue chain is Isopentenyl-diphosphate Delta-isomerase I (235 aa).

K38 contacts substrate. H42 and H54 together coordinate Mg(2+). The 153-residue stretch at 52–204 folds into the Nudix hydrolase domain; sequence LLHRAFSVFL…GLKLSPWFRL (153 aa). 2 residues coordinate substrate: R73 and K77. C89 is an active-site residue. S90 contributes to the substrate binding site. Mg(2+) contacts are provided by E149 and E151. Residue E151 is part of the active site.

Belongs to the IPP isomerase type 1 family. Mg(2+) serves as cofactor.

It catalyses the reaction isopentenyl diphosphate = dimethylallyl diphosphate. The protein operates within isoprenoid biosynthesis; dimethylallyl diphosphate biosynthesis; dimethylallyl diphosphate from isopentenyl diphosphate: step 1/1. It participates in porphyrin-containing compound metabolism; chlorophyll biosynthesis. In terms of biological role, catalyzes the 1,3-allylic rearrangement of the homoallylic substrate isopentenyl (IPP) to its highly electrophilic allylic isomer, dimethylallyl diphosphate (DMAPP). In Camptotheca acuminata (Happy tree), this protein is Isopentenyl-diphosphate Delta-isomerase I (IPI1).